The chain runs to 63 residues: Small ribosomal subunit protein bS21 (63 aa).

It belongs to the bacterial ribosomal protein bS21 family.

The chain is Small ribosomal subunit protein bS21 from Syntrophus aciditrophicus (strain SB).